The chain runs to 318 residues: uncharacterized protein (318 aa).

This sequence belongs to the glycosyltransferase 2 family.

This is an uncharacterized protein from Rickettsia typhi (strain ATCC VR-144 / Wilmington).